Here is a 446-residue protein sequence, read N- to C-terminus: Glutamyl-tRNA reductase (446 aa).

Substrate-binding positions include 49–52 (TCNR), S109, 114–116 (ETQ), and Q120. Catalysis depends on C50, which acts as the Nucleophile. 189 to 194 (GAGKMG) lines the NADP(+) pocket.

This sequence belongs to the glutamyl-tRNA reductase family. In terms of assembly, homodimer.

The enzyme catalyses (S)-4-amino-5-oxopentanoate + tRNA(Glu) + NADP(+) = L-glutamyl-tRNA(Glu) + NADPH + H(+). The protein operates within porphyrin-containing compound metabolism; protoporphyrin-IX biosynthesis; 5-aminolevulinate from L-glutamyl-tRNA(Glu): step 1/2. Its function is as follows. Catalyzes the NADPH-dependent reduction of glutamyl-tRNA(Glu) to glutamate 1-semialdehyde (GSA). This is Glutamyl-tRNA reductase from Priestia megaterium (Bacillus megaterium).